Reading from the N-terminus, the 234-residue chain is Glutathione S-transferase sirG (234 aa).

Residues 15–99 form the GST N-terminal domain; sequence LYVVKATPTS…YLTDAYDHEG (85 aa). The GST C-terminal domain maps to 105–230; it reads DLWERTQVNN…KALSQKFRPS (126 aa).

Belongs to the GST superfamily.

It catalyses the reaction RX + glutathione = an S-substituted glutathione + a halide anion + H(+). The protein operates within mycotoxin biosynthesis. In terms of biological role, glutathione S-transferase; part of the gene cluster that mediates the biosynthesis of sirodesmin PL, an epipolythiodioxopiperazine (ETP) characterized by a disulfide bridged cyclic dipeptide and that acts as a phytotoxin which is involved in the blackleg didease of canola. SirD catalyzes the O-prenylation of L-tyrosine (L-Tyr) in the presence of dimethylallyl diphosphate (DMAPP) to yield 4-O-dimethylallyl-L-Tyr, and therefore represents probably the first pathway-specific enzyme in the biosynthesis of sirodesmin PL. 4-O-dimethylallyl-L-Tyr, then undergoes condensation with L-Ser in a reaction catalyzed by the non-ribosomal peptide synthase sirP to form the diketopiperazine (DKP) backbone. Further bishydroxylation of the DKP performed by the cytochrome P450 monooxygenase sirC leads to the production of the intermediate phomamide. This step is essential to form the reactive thiol group required for toxicity of sirodesmin PL. The next steps of sirodesmin biosynthesis are not well understood yet, but some predictions could be made from intermediate compounds identification. Phomamide is converted into phomalizarine via oxidation, probably by sirT. Further oxidation, methylation (by sirM or sirN) and reduction steps convert phomalizarine to deacetyl sirodesmin. Finally, acetyltransferase sirH probably acetylates deacetyl sirodesmin to produce sirodesmin PL. The chain is Glutathione S-transferase sirG from Leptosphaeria maculans (Blackleg fungus).